Here is a 71-residue protein sequence, read N- to C-terminus: Ribosome modulation factor (71 aa).

This sequence belongs to the ribosome modulation factor family.

Its subcellular location is the cytoplasm. Its function is as follows. During stationary phase, converts 70S ribosomes to an inactive dimeric form (100S ribosomes). The sequence is that of Ribosome modulation factor from Pseudomonas savastanoi pv. phaseolicola (strain 1448A / Race 6) (Pseudomonas syringae pv. phaseolicola (strain 1448A / Race 6)).